The chain runs to 183 residues: Probable GTP-binding protein EngB (183 aa).

An EngB-type G domain is found at aspartate 18–leucine 183. Residues glycine 26–serine 33, glycine 52–leucine 56, aspartate 70–glycine 73, threonine 137–aspartate 140, and valine 166–serine 168 each bind GTP. Mg(2+) contacts are provided by serine 33 and threonine 54.

This sequence belongs to the TRAFAC class TrmE-Era-EngA-EngB-Septin-like GTPase superfamily. EngB GTPase family. Mg(2+) is required as a cofactor.

Necessary for normal cell division and for the maintenance of normal septation. The sequence is that of Probable GTP-binding protein EngB from Metamycoplasma arthritidis (strain 158L3-1) (Mycoplasma arthritidis).